Here is a 566-residue protein sequence, read N- to C-terminus: Solute carrier family 2, facilitated glucose transporter member 9 (566 aa).

The disordered stretch occupies residues 1 to 31 (MARKQNRNSKELGLAPLADDTSHAGPPGPGR). Residues 1–51 (MARKQNRNSKELGLAPLADDTSHAGPPGPGRALLECDHLRSGLPDGRRRKD) are Cytoplasmic-facing. A Phosphoserine modification is found at S9. A helical transmembrane segment spans residues 52-72 (WSCSLLVASLAGAFGSSFLYG). At 73 to 107 (YNLSVVNAPTPYIKAFYNESWERRHGRPIDPDTLT) the chain is on the extracellular side. Residues N74 and N90 are each glycosylated (N-linked (GlcNAc...) asparagine). A helical transmembrane segment spans residues 108-128 (LLWSVTVSIFAIGGLVGTLMV). Over 129-140 (KMIGKVLGRKHT) the chain is Cytoplasmic. A helical membrane pass occupies residues 141–161 (LLANNGFAISAALLMACSLQA). The Extracellular portion of the chain corresponds to 162 to 171 (GAFEMLIVGR). The helical transmembrane segment at 172–192 (FIMGIDGGIALSVLPMYLSEI) threads the bilayer. At 193–200 (SPKEIRGS) the chain is on the cytoplasmic side. The helical transmembrane segment at 201–221 (LGQVTAIFICIGVFTGQLLGL) threads the bilayer. At 222-231 (PELLGKESTW) the chain is on the extracellular side. A helical transmembrane segment spans residues 232-252 (PYLFGVIVVPAVVQLLSLPFL). Residues 253–316 (PDSPRYLLLE…LRAPYVRWQV (64 aa)) are Cytoplasmic-facing. A helical membrane pass occupies residues 317 to 337 (VTVIVTMACYQLCGLNAIWFY). Over 338-354 (TNSIFGKAGIPPAKIPY) the chain is Extracellular. A helical membrane pass occupies residues 355–375 (VTLSTGGIETLAAIFSGLVIE). Over 376–381 (HLGRRP) the chain is Cytoplasmic. The helical transmembrane segment at 382–402 (LLIGGFGLMALFFGTLTVTLT) threads the bilayer. Topologically, residues 403-415 (LQDRAPWVPYLSI) are extracellular. A helical membrane pass occupies residues 416–436 (VGILAIIASFCSGPGGIPFIL). At 437–451 (TGEFFQQSQRPAAFI) the chain is on the cytoplasmic side. The chain crosses the membrane as a helical span at residues 452 to 472 (IAGTVNWLSNFAVGLLFPFIQ). Residues 473–478 (KSLDTY) are Extracellular-facing. A helical transmembrane segment spans residues 479-499 (CFLVFATICMTGAIYLYFVLP). The Cytoplasmic segment spans residues 500–566 (ETKNRTYAEI…YMDDLTFQET (67 aa)). Phosphoserine is present on S514. Residues 524–539 (EKIDSAVTDGKTKGRP) are compositionally biased toward basic and acidic residues. The disordered stretch occupies residues 524–543 (EKIDSAVTDGKTKGRPEQVS).

Belongs to the major facilitator superfamily. Sugar transporter (TC 2.A.1.1) family.

It is found in the basolateral cell membrane. It localises to the apical cell membrane. The catalysed reaction is urate(out) = urate(in). Its function is as follows. High-capacity urate transporter, which may play a role in the urate reabsorption by proximal tubules. May have a residual high-affinity, low-capacity glucose and fructose transporter activity. Transports urate at rates 45- to 60-fold faster than glucose. Does not transport galactose. May mediate small uptake of adenine but not of other nucleobases. This chain is Solute carrier family 2, facilitated glucose transporter member 9, found in Pongo abelii (Sumatran orangutan).